The following is a 258-amino-acid chain: Imidazole glycerol phosphate synthase subunit HisF (258 aa).

Catalysis depends on residues D11 and D130.

The protein belongs to the HisA/HisF family. In terms of assembly, heterodimer of HisH and HisF.

The protein resides in the cytoplasm. The catalysed reaction is 5-[(5-phospho-1-deoxy-D-ribulos-1-ylimino)methylamino]-1-(5-phospho-beta-D-ribosyl)imidazole-4-carboxamide + L-glutamine = D-erythro-1-(imidazol-4-yl)glycerol 3-phosphate + 5-amino-1-(5-phospho-beta-D-ribosyl)imidazole-4-carboxamide + L-glutamate + H(+). It functions in the pathway amino-acid biosynthesis; L-histidine biosynthesis; L-histidine from 5-phospho-alpha-D-ribose 1-diphosphate: step 5/9. In terms of biological role, IGPS catalyzes the conversion of PRFAR and glutamine to IGP, AICAR and glutamate. The HisF subunit catalyzes the cyclization activity that produces IGP and AICAR from PRFAR using the ammonia provided by the HisH subunit. This chain is Imidazole glycerol phosphate synthase subunit HisF, found in Bradyrhizobium sp. (strain BTAi1 / ATCC BAA-1182).